A 319-amino-acid polypeptide reads, in one-letter code: Beta-ketoacyl-[acyl-carrier-protein] synthase III (319 aa).

Residues C115 and H246 contribute to the active site. The segment at 247–251 is ACP-binding; the sequence is QANLR. N276 is a catalytic residue.

The protein belongs to the thiolase-like superfamily. FabH family. As to quaternary structure, homodimer.

The protein localises to the cytoplasm. The catalysed reaction is malonyl-[ACP] + acetyl-CoA + H(+) = 3-oxobutanoyl-[ACP] + CO2 + CoA. Its pathway is lipid metabolism; fatty acid biosynthesis. Functionally, catalyzes the condensation reaction of fatty acid synthesis by the addition to an acyl acceptor of two carbons from malonyl-ACP. Catalyzes the first condensation reaction which initiates fatty acid synthesis and may therefore play a role in governing the total rate of fatty acid production. Possesses both acetoacetyl-ACP synthase and acetyl transacylase activities. Its substrate specificity determines the biosynthesis of branched-chain and/or straight-chain of fatty acids. In Coxiella burnetii (strain RSA 331 / Henzerling II), this protein is Beta-ketoacyl-[acyl-carrier-protein] synthase III.